We begin with the raw amino-acid sequence, 784 residues long: Armadillo repeat-containing X-linked protein 2 (784 aa).

Residues 1–6 lie on the Mitochondrial intermembrane side of the membrane; it reads MSRARD. 2 mitochondrion outer membrane (MOM)-targeting sequence regions span residues 1 to 6 and 26 to 40; these read MSRARD and KYTRGKDQKKKRLTK. Residues 7–27 traverse the membrane as a helical; Signal-anchor segment; that stretch reads AGCVAAGIVIGASAWYCVYKY. Over 28–784 the chain is Cytoplasmic; the sequence is TRGKDQKKKR…VKVIKLVNKF (757 aa). 3 disordered regions span residues 328–353, 388–461, and 488–522; these read TSGGAAVPSGGAATPRAAASTQRTAS, HSGA…ELGM, and PESEEGESGWTDTESDSDSEPDVPQRGKGKRTIPM. Positions 396–418 are enriched in low complexity; it reads GTSGSSKTAATGKKAAPGAHTGA. A compositionally biased stretch (acidic residues) spans 488 to 508; it reads PESEEGESGWTDTESDSDSEP. ARM repeat units follow at residues 528 to 568, 570 to 609, and 650 to 689; these read PYEI…NNAN, SCNQETIRKLGGLPIIANMINKTDPHIKEKALMAMNNLSE, and ITNDYQHLLVNSIANFFRLLSQGGGKIKVEILKILSNFAE.

The protein belongs to the eutherian X-chromosome-specific Armcx family. Widely expressed in the adult nervous tissue, especially in the forebrain, including the cerebral cortex, hippocampus and thalamus.

Its subcellular location is the mitochondrion. It is found in the mitochondrion outer membrane. May regulate the dynamics and distribution of mitochondria in neural cells. The sequence is that of Armadillo repeat-containing X-linked protein 2 (Armcx2) from Mus musculus (Mouse).